A 164-amino-acid polypeptide reads, in one-letter code: Large ribosomal subunit protein bL9 (164 aa).

The protein belongs to the bacterial ribosomal protein bL9 family.

In terms of biological role, binds to the 23S rRNA. This Borrelia duttonii (strain Ly) protein is Large ribosomal subunit protein bL9.